A 971-amino-acid polypeptide reads, in one-letter code: Unconventional myosin-XIX (971 aa).

Residues 1–25 are disordered; it reads MSRPLSKNTEREPKQINGHQNNLSN. In terms of domain architecture, Myosin motor spans 48 to 755; the sequence is HLYDDLTKVN…MVELLEERRL (708 aa). Residue 145–152 coordinates ATP; it reads GESGAGKT. The actin-binding stretch occupies residues 611–633; that stretch reads LESLMQILHSTTPHYIRCIKPNV. 2 IQ domains span residues 758–787 and 780–809; these read ISSKAMCIQCCWRSYRQRKLAKQSKAATTI and QSKAATTIQAAVKGWLTKKYIKRMHSAATV. The interval 826-971 is myMOMA region; the sequence is AAELDDSTED…FNEILLEKTV (146 aa).

This sequence belongs to the TRAFAC class myosin-kinesin ATPase superfamily. Myosin family. Myosin is a hexamer of 2 heavy chains and 4 light chains.

The protein localises to the mitochondrion outer membrane. The protein resides in the cytoplasm. It is found in the cytoskeleton. Actin-based motor molecule with ATPase activity that localizes to the mitochondrion outer membrane. Motor protein that moves towards the plus-end of actin filaments. Required for mitochondrial inheritance during mitosis. May be involved in mitochondrial transport or positioning. This chain is Unconventional myosin-XIX, found in Xenopus laevis (African clawed frog).